The following is a 1088-amino-acid chain: Ran-binding protein 17 (1088 aa).

Alanine 2 carries the N-acetylalanine modification. The residue at position 569 (serine 569) is a Phosphoserine.

The protein belongs to the exportin family. Binds to nucleoporins and the GTP-bound form of Ran. As to expression, highly expressed in testis, moderately in pancreas and weakly in other tissues studied.

Its subcellular location is the cytoplasm. It is found in the nucleus. The protein localises to the nuclear pore complex. May function as a nuclear transport receptor. The polypeptide is Ran-binding protein 17 (RANBP17) (Homo sapiens (Human)).